The sequence spans 201 residues: Probable quinol oxidase subunit 3 (201 aa).

5 helical membrane passes run 20–40, 62–82, 91–111, 133–153, and 172–192; these read LGFW…FATL, LILI…IAIY, LMMF…GFEI, FFIL…WVIC, and FIVS…FTAV.

It belongs to the cytochrome c oxidase subunit 3 family.

The protein resides in the cell membrane. It carries out the reaction 2 a quinol + O2 = 2 a quinone + 2 H2O. Catalyzes quinol oxidation with the concomitant reduction of oxygen to water. This is Probable quinol oxidase subunit 3 (qoxC) from Staphylococcus epidermidis (strain ATCC 35984 / DSM 28319 / BCRC 17069 / CCUG 31568 / BM 3577 / RP62A).